Reading from the N-terminus, the 207-residue chain is Guanylate kinase (207 aa).

The Guanylate kinase-like domain maps to 6-185 (GLLIVLSGPS…AKNRIQSIVE (180 aa)). 13 to 20 (GPSGVGKG) is a binding site for ATP.

It belongs to the guanylate kinase family.

Its subcellular location is the cytoplasm. It catalyses the reaction GMP + ATP = GDP + ADP. Its function is as follows. Essential for recycling GMP and indirectly, cGMP. The chain is Guanylate kinase from Staphylococcus epidermidis (strain ATCC 12228 / FDA PCI 1200).